The chain runs to 236 residues: Small ribosomal subunit protein uS2 (236 aa).

Belongs to the universal ribosomal protein uS2 family.

This Brevibacillus brevis (strain 47 / JCM 6285 / NBRC 100599) protein is Small ribosomal subunit protein uS2.